The sequence spans 373 residues: Probable neutral protease 2 homolog MCYG_05201 (373 aa).

The N-terminal stretch at Met1–Ala19 is a signal peptide. Residues Leu20–Arg187 constitute a propeptide that is removed on maturation. Cystine bridges form between Cys195–Cys265 and Cys272–Cys290. His314 contributes to the Zn(2+) binding site. Glu315 is a catalytic residue. Positions 318 and 329 each coordinate Zn(2+).

It belongs to the peptidase M35 family. Requires Zn(2+) as cofactor.

It localises to the secreted. The catalysed reaction is Preferential cleavage of bonds with hydrophobic residues in P1'. Also 3-Asn-|-Gln-4 and 8-Gly-|-Ser-9 bonds in insulin B chain.. Probable secreted metalloprotease that shows high activities on basic nuclear substrates such as histone and protamine. May be involved in virulence. This Arthroderma otae (strain ATCC MYA-4605 / CBS 113480) (Microsporum canis) protein is Probable neutral protease 2 homolog MCYG_05201.